Reading from the N-terminus, the 135-residue chain is Galectin-1 (135 aa).

An N-acetylalanine modification is found at A2. The Galectin domain occupies 4–135; that stretch reads GLVASNLNLK…DFKIKCVAFE (132 aa). N6-acetyllysine occurs at positions 13, 19, and 29. Phosphoserine is present on S30. Residues 45–49, H53, N62, and 69–72 contribute to the a beta-D-galactoside site; these read HFNPR and WGTE. The residue at position 108 (K108) is an N6-acetyllysine; alternate. An N6-succinyllysine; alternate modification is found at K108. K128 bears the N6-acetyllysine mark.

In terms of assembly, homodimer. Binds LGALS3BP. Interacts with CD2, CD3, CD4, CD6, CD7, CD43, ALCAM and CD45. Interacts with laminin (via poly-N-acetyllactosamine). Interacts with SUSD2. Interacts with cargo receptor TMED10; the interaction mediates the translocation from the cytoplasm into the ERGIC (endoplasmic reticulum-Golgi intermediate compartment) and thereby secretion. Interacts with CD69.

Its subcellular location is the secreted. The protein resides in the extracellular space. The protein localises to the extracellular matrix. It localises to the cytoplasm. In terms of biological role, lectin that binds beta-galactoside and a wide array of complex carbohydrates. Plays a role in regulating apoptosis, cell proliferation and cell differentiation. Inhibits CD45 protein phosphatase activity and therefore the dephosphorylation of Lyn kinase. Strong inducer of T-cell apoptosis. Plays a negative role in Th17 cell differentiation via activation of the receptor CD69. The polypeptide is Galectin-1 (Lgals1) (Mus musculus (Mouse)).